Reading from the N-terminus, the 306-residue chain is Putative lipid kinase Sca_1050 (306 aa).

The region spanning 3–139 (QHFHRGILFY…FDVLKVNDTY (137 aa)) is the DAGKc domain. ATP contacts are provided by residues Ser-44, 74–80 (GDGTVNE), and Thr-101. Mg(2+) is bound by residues Ser-220, Asp-223, and Glu-225. The active-site Proton acceptor is Glu-281.

The protein belongs to the diacylglycerol/lipid kinase family. It depends on Mg(2+) as a cofactor.

Its function is as follows. May catalyze the ATP-dependent phosphorylation of lipids other than diacylglycerol (DAG). The sequence is that of Putative lipid kinase Sca_1050 from Staphylococcus carnosus (strain TM300).